The primary structure comprises 347 residues: Protein RecA (347 aa).

66–73 (GPESSGKT) is a binding site for ATP.

Belongs to the RecA family.

The protein localises to the cytoplasm. In terms of biological role, can catalyze the hydrolysis of ATP in the presence of single-stranded DNA, the ATP-dependent uptake of single-stranded DNA by duplex DNA, and the ATP-dependent hybridization of homologous single-stranded DNAs. It interacts with LexA causing its activation and leading to its autocatalytic cleavage. This is Protein RecA from Burkholderia cepacia (Pseudomonas cepacia).